A 408-amino-acid chain; its full sequence is LL-diaminopimelate aminotransferase (408 aa).

Substrate is bound by residues tyrosine 15 and glycine 42. Pyridoxal 5'-phosphate is bound by residues tyrosine 72, 108–109 (SK), tyrosine 132, asparagine 187, tyrosine 218, and 246–248 (SFS). The substrate site is built by lysine 109, tyrosine 132, and asparagine 187. Lysine 249 is modified (N6-(pyridoxal phosphate)lysine). The pyridoxal 5'-phosphate site is built by arginine 257 and asparagine 292. Residues asparagine 292 and arginine 388 each contribute to the substrate site.

This sequence belongs to the class-I pyridoxal-phosphate-dependent aminotransferase family. LL-diaminopimelate aminotransferase subfamily. Homodimer. Pyridoxal 5'-phosphate is required as a cofactor.

It carries out the reaction (2S,6S)-2,6-diaminopimelate + 2-oxoglutarate = (S)-2,3,4,5-tetrahydrodipicolinate + L-glutamate + H2O + H(+). The protein operates within amino-acid biosynthesis; L-lysine biosynthesis via DAP pathway; LL-2,6-diaminopimelate from (S)-tetrahydrodipicolinate (aminotransferase route): step 1/1. In terms of biological role, involved in the synthesis of meso-diaminopimelate (m-DAP or DL-DAP), required for both lysine and peptidoglycan biosynthesis. Catalyzes the direct conversion of tetrahydrodipicolinate to LL-diaminopimelate. In Synechococcus sp. (strain WH7803), this protein is LL-diaminopimelate aminotransferase.